Here is a 269-residue protein sequence, read N- to C-terminus: GTP cyclohydrolase FolE2 (269 aa).

The protein belongs to the GTP cyclohydrolase IV family.

It carries out the reaction GTP + H2O = 7,8-dihydroneopterin 3'-triphosphate + formate + H(+). It participates in cofactor biosynthesis; 7,8-dihydroneopterin triphosphate biosynthesis; 7,8-dihydroneopterin triphosphate from GTP: step 1/1. Converts GTP to 7,8-dihydroneopterin triphosphate. The protein is GTP cyclohydrolase FolE2 of Burkholderia thailandensis (strain ATCC 700388 / DSM 13276 / CCUG 48851 / CIP 106301 / E264).